Consider the following 664-residue polypeptide: Cytoskeleton-associated protein 2 (664 aa).

A disordered region spans residues 1–38; sequence MAESRKRFLGRAARNPLPVTRDLQLPPTRRDQPAFREQ. Residues 28-38 are compositionally biased toward basic and acidic residues; sequence TRRDQPAFREQ. The tract at residues 160 to 319 is association with alpha- and beta-tubulin; sequence PKQDSNVSKK…ASKDAARTDS (160 aa). Ser-186 bears the Phosphoserine mark. Disordered stretches follow at residues 254-273, 283-328, 366-393, and 512-545; these read IRSLHSSSHGAAKQGLSRPL, LDKE…MVKP, GKGKGLKRPPHSVVTQAEPKGQSENPVG, and AHATKEPIQEVNADANVGSGKPGEENEHHGKVEV. A compositionally biased stretch (polar residues) spans 300–309; sequence GSSQAPSRSI. The segment covering 366-375 has biased composition (basic residues); it reads GKGKGLKRPP. Basic and acidic residues predominate over residues 533 to 545; sequence PGEENEHHGKVEV. Thr-561 carries the post-translational modification Phosphothreonine. At Ser-577 the chain carries Phosphoserine. At Thr-579 the chain carries Phosphothreonine. The residue at position 584 (Ser-584) is a Phosphoserine.

This sequence belongs to the CKAP2 family. In terms of assembly, associates with alpha- and beta-tubulins.

It localises to the cytoplasm. Its subcellular location is the cytoskeleton. The protein localises to the spindle. The protein resides in the spindle pole. Its function is as follows. Possesses microtubule stabilizing properties. Involved in regulating aneuploidy, cell cycling, and cell death in a p53-dependent manner. The chain is Cytoskeleton-associated protein 2 from Mus musculus (Mouse).